We begin with the raw amino-acid sequence, 440 residues long: MFLAQEIIRKKRDGHALSDEEIRFFINGIRDNTISEGQIAALAMTIFFHDMTMPERVSLTMAMRDSGTVLDWKSLHLNGPIVDKHSTGGVGDVTSLMLGPMVAACGGYIPMISGRGLGHTGGTLDKLESIPGFDIFPDDNRFREIIKDVGVAIIGQTSSLAPADKRFYATRDITATVDSIPLITASILAKKLAEGLDALVMDVKVGSGAFMPTYELSEALAEAIVGVANGAGVRTTALLTDMNQVLASSAGNAVEVREAVQFLTGEYRNPRLFDVTMALCVEMLISGKLAKDDAEARAKLQAVLDNGKAAEVFGRMVAAQKGPTDFVENYAKYLPTAMLTKAVYADTEGFVSEMDARALGMAVVAMGGGRRQASDTIDYSVGFTDMARLGDQVDGQRPLAVIHAKDENSWQEAAKAVKAAIKLADKAPESTPTVYRRISE.

Belongs to the thymidine/pyrimidine-nucleoside phosphorylase family. Homodimer.

It carries out the reaction thymidine + phosphate = 2-deoxy-alpha-D-ribose 1-phosphate + thymine. It functions in the pathway pyrimidine metabolism; dTMP biosynthesis via salvage pathway; dTMP from thymine: step 1/2. Its function is as follows. The enzymes which catalyze the reversible phosphorolysis of pyrimidine nucleosides are involved in the degradation of these compounds and in their utilization as carbon and energy sources, or in the rescue of pyrimidine bases for nucleotide synthesis. This Shigella boydii serotype 4 (strain Sb227) protein is Thymidine phosphorylase.